The following is a 441-amino-acid chain: MRPRRFTANGPLKGRIGVPGDKSISHRSIMLGALAVGETRVTGLLEGEDVLSTAAAMRAMGATIERDADGMWHVHGVGVGGLLQPQQALDMGNSGTSTRLLMGLVATHPITATFVGDASLSKRPMGRVIDPLSTMGAEFTASPGGRLPLTLRGISPAVPIEYRLPVASAQVKSAVLLAGLNTPGVTTVIEPIPTRDHSERMLRGFGAELTVDVAADGARVIRVRGEAELKPQDIAVPGDPSSAAFFVVAALLVEGSDLVVENVGLNPTRAALFDVLRLMGGSIEELNRREVGGEPVADLRVRHSLLTGIDVDPAVVPSMVDEFPVLFVAAALAKGRTVTTGLEELRVKESDRISAMRAALELAGATVTETEDGLIIDGTGGDPLPGTAEGASVVTHLDHRIAMSMAIAGIASRNGVEVDDTRPIATSFPVFESLLESATRP.

3-phosphoshikimate is bound by residues lysine 22, serine 23, and arginine 27. Lysine 22 contributes to the phosphoenolpyruvate binding site. Phosphoenolpyruvate contacts are provided by glycine 95 and arginine 123. Residues serine 168, glutamine 170, aspartate 321, and lysine 348 each coordinate 3-phosphoshikimate. A phosphoenolpyruvate-binding site is contributed by glutamine 170. Aspartate 321 serves as the catalytic Proton acceptor. Phosphoenolpyruvate contacts are provided by arginine 352 and arginine 400.

This sequence belongs to the EPSP synthase family. Monomer.

It localises to the cytoplasm. The catalysed reaction is 3-phosphoshikimate + phosphoenolpyruvate = 5-O-(1-carboxyvinyl)-3-phosphoshikimate + phosphate. The protein operates within metabolic intermediate biosynthesis; chorismate biosynthesis; chorismate from D-erythrose 4-phosphate and phosphoenolpyruvate: step 6/7. Its function is as follows. Catalyzes the transfer of the enolpyruvyl moiety of phosphoenolpyruvate (PEP) to the 5-hydroxyl of shikimate-3-phosphate (S3P) to produce enolpyruvyl shikimate-3-phosphate and inorganic phosphate. This Novosphingobium aromaticivorans (strain ATCC 700278 / DSM 12444 / CCUG 56034 / CIP 105152 / NBRC 16084 / F199) protein is 3-phosphoshikimate 1-carboxyvinyltransferase.